We begin with the raw amino-acid sequence, 573 residues long: Flagellin B (573 aa).

This sequence belongs to the bacterial flagellin family. Heteromer of FlaA and FlaB. A flagellar filament composed exclusively of FlaA is indistinguishable in length from that of the wild-type and shows a slight reduction in motility. The flagellar filament composed exclusively of the FlaB is severely truncated in length and greatly reduced in motility. Thus, while both flagellins are not necessary for motility, both are required for a fully active flagellar filament.

It is found in the secreted. The protein resides in the bacterial flagellum. Functionally, flagellin is the subunit protein which polymerizes to form the filaments of bacterial flagella. The chain is Flagellin B (flaB) from Campylobacter coli.